A 442-amino-acid polypeptide reads, in one-letter code: ATP-dependent protease ATPase subunit HslU (442 aa).

ATP-binding positions include I18, 60–65, D255, E320, and R392; that span reads GVGKTE.

The protein belongs to the ClpX chaperone family. HslU subfamily. A double ring-shaped homohexamer of HslV is capped on each side by a ring-shaped HslU homohexamer. The assembly of the HslU/HslV complex is dependent on binding of ATP.

It is found in the cytoplasm. Functionally, ATPase subunit of a proteasome-like degradation complex; this subunit has chaperone activity. The binding of ATP and its subsequent hydrolysis by HslU are essential for unfolding of protein substrates subsequently hydrolyzed by HslV. HslU recognizes the N-terminal part of its protein substrates and unfolds these before they are guided to HslV for hydrolysis. The polypeptide is ATP-dependent protease ATPase subunit HslU (Aeromonas hydrophila subsp. hydrophila (strain ATCC 7966 / DSM 30187 / BCRC 13018 / CCUG 14551 / JCM 1027 / KCTC 2358 / NCIMB 9240 / NCTC 8049)).